We begin with the raw amino-acid sequence, 412 residues long: Tyrosine--tRNA ligase (412 aa).

The short motif at 50 to 59 is the 'HIGH' region element; the sequence is PTGTDIHLGH. Residues 244 to 248 carry the 'KMSKS' region motif; that stretch reads KMSKS. Lys247 is an ATP binding site. Residues 348–411 form the S4 RNA-binding domain; sequence VKFFYLLSSL…IGKKIIKRFE (64 aa).

It belongs to the class-I aminoacyl-tRNA synthetase family. TyrS type 2 subfamily. In terms of assembly, homodimer.

It is found in the cytoplasm. The enzyme catalyses tRNA(Tyr) + L-tyrosine + ATP = L-tyrosyl-tRNA(Tyr) + AMP + diphosphate + H(+). In terms of biological role, catalyzes the attachment of tyrosine to tRNA(Tyr) in a two-step reaction: tyrosine is first activated by ATP to form Tyr-AMP and then transferred to the acceptor end of tRNA(Tyr). This is Tyrosine--tRNA ligase from Prochlorococcus marinus (strain MIT 9312).